The chain runs to 1845 residues: Proteasome activator complex subunit 4 (1845 aa).

Basic and acidic residues predominate over residues Met1–Leu13. The segment at Met1 to Phe26 is disordered. HEAT repeat units lie at residues Pro475–Cys519 and Asn1000–Gly1039. A Phosphoserine modification is found at Ser1123. 2 HEAT repeats span residues Arg1181–Arg1219 and Asp1356–His1394. Residue Ser1616 is modified to Phosphoserine. 2 HEAT repeats span residues Pro1638 to Phe1676 and Glu1682 to Leu1720. The segment at Ala1652–Lys1740 is bromodomain-like (BRDL).

Belongs to the BLM10 family. As to quaternary structure, homodimer. Component of the spermatoproteasome, a form of the proteasome specifically found in testis. Interacts with the 20S and 26S proteasomes. In terms of processing, phosphorylated.

It localises to the cytoplasm. The protein resides in the cytosol. The protein localises to the nucleus. Its subcellular location is the nucleus speckle. Functionally, associated component of the proteasome that specifically recognizes acetylated histones and promotes ATP- and ubiquitin-independent degradation of core histones during spermatogenesis and DNA damage response. Recognizes and binds acetylated histones via its bromodomain-like (BRDL) region and activates the proteasome by opening the gated channel for substrate entry. Binds to the core proteasome via its C-terminus, which occupies the same binding sites as the proteasomal ATPases, opening the closed structure of the proteasome via an active gating mechanism. Component of the spermatoproteasome, a form of the proteasome specifically found in testis: binds to acetylated histones and promotes degradation of histones, thereby participating actively to the exchange of histones during spermatogenesis. Also involved in DNA damage response in somatic cells, by promoting degradation of histones following DNA double-strand breaks. This chain is Proteasome activator complex subunit 4 (PSME4), found in Bos taurus (Bovine).